The following is a 58-amino-acid chain: Large ribosomal subunit protein uL30 (58 aa).

The protein belongs to the universal ribosomal protein uL30 family. In terms of assembly, part of the 50S ribosomal subunit.

In Pseudomonas putida (strain ATCC 700007 / DSM 6899 / JCM 31910 / BCRC 17059 / LMG 24140 / F1), this protein is Large ribosomal subunit protein uL30.